A 479-amino-acid chain; its full sequence is Adenosylhomocysteinase (479 aa).

Substrate-binding residues include Thr56, Asp133, and Glu199. 200–202 (TTT) serves as a coordination point for NAD(+). Substrate is bound by residues Lys229 and Asp233. Residues Asn234, 263 to 268 (GYGDVG), Glu286, Asn321, 342 to 344 (IGH), and Asn390 each bind NAD(+).

Belongs to the adenosylhomocysteinase family. Homotetramer. NAD(+) serves as cofactor.

It carries out the reaction S-adenosyl-L-homocysteine + H2O = L-homocysteine + adenosine. It participates in amino-acid biosynthesis; L-homocysteine biosynthesis; L-homocysteine from S-adenosyl-L-homocysteine: step 1/1. Adenosylhomocysteine is a competitive inhibitor of S-adenosyl-L-methionine-dependent methyl transferase reactions; therefore adenosylhomocysteinase may play a key role in the control of methylations via regulation of the intracellular concentration of adenosylhomocysteine. The chain is Adenosylhomocysteinase from Plasmodium chabaudi chabaudi.